A 719-amino-acid chain; its full sequence is LKIVVERDPIKTSFEKWAKPGHFSKTLAKGPNTTTWIWNLHADAHDFDSHTNDLEEISRKVFSAHFGQLAIIFIWLSGMYFHGARFSNYEAWLGDPTHIKPSAQVVWPIVGQEILNGDVGGGFRGIQITSGFFQIWRASGITSELQLYCTATGALIFAALMLFAGWFHYHKAAPKLAWFQDVESMLNHHLAGLLGLGSLGWAGHQVHVSLPINQLLDAGVDPKEIPLPHEFISNRDLLAQLYPSFAEGLTPFFTLNWSEYSDFLTFRGGLNPVTGGLWLTDTAHHHLAIAILFLIAGHMYRTNWGIGHNLKEILEAHKGPFTGEGHRGLYEILTTSWHAQLALNLAMLGSLTIVVAHHMYSMPPYPYLAIDYGTQLSLFTHHMWIGGFLIVGAAAHAAIFMVRDYDPTTQYNNLLDRVLRHRDAIVSHLNWACIFLGFHSFGLYIHNDTMSALGRPQDMFSDTAIQLQPIFAQWIQNTHASSPSLTAPDATASTSLTWGGGDLVAVGAKVALLPIPLGTADFLVHHIHAFTIHVTVLILLKGVLFARSSRLIPDKVNLGFRFPCDGPGRGGTCQVSAWDHVFLGLFWMYNAISVVIFHFSWKMQSDVWGSISDQGVVTHITGGNFAQSSITINGWLRDFLWAQASQVIQSYGSSLSAYGLFFLGAHFVWAFSLMFLFSGRGYWQELIESIVWAHNKLKVAPAIQPRALSIVQGRAVGVA.

Helical transmembrane passes span 61–84 (VFSA…FHGA), 147–170 (LYCT…FHYH), 186–210 (LNHH…HVSL), 282–300 (TAHH…GHMY), 337–360 (WHAQ…HHMY), 376–402 (LSLF…IFMV), 424–446 (AIVS…LYIH), and 522–540 (FLVH…LILL). [4Fe-4S] cluster-binding residues include C564 and C573. Helical transmembrane passes span 580-601 (HVFL…HFSW) and 655-677 (LSAY…MFLF). Chlorophyll a' is bound at residue H666. Residues M674 and Y682 each contribute to the chlorophyll a site. Residue W683 participates in phylloquinone binding. A helical transmembrane segment spans residues 715-719 (AVGVA).

Belongs to the PsaA/PsaB family. In terms of assembly, the PsaA/B heterodimer binds the P700 chlorophyll special pair and subsequent electron acceptors. PSI consists of a core antenna complex that captures photons, and an electron transfer chain that converts photonic excitation into a charge separation. The eukaryotic PSI reaction center is composed of at least 11 subunits. The cofactor is P700 is a chlorophyll a/chlorophyll a' dimer, A0 is one or more chlorophyll a, A1 is one or both phylloquinones and FX is a shared 4Fe-4S iron-sulfur center..

The protein resides in the plastid. Its subcellular location is the chloroplast thylakoid membrane. The catalysed reaction is reduced [plastocyanin] + hnu + oxidized [2Fe-2S]-[ferredoxin] = oxidized [plastocyanin] + reduced [2Fe-2S]-[ferredoxin]. In terms of biological role, psaA and PsaB bind P700, the primary electron donor of photosystem I (PSI), as well as the electron acceptors A0, A1 and FX. PSI is a plastocyanin-ferredoxin oxidoreductase, converting photonic excitation into a charge separation, which transfers an electron from the donor P700 chlorophyll pair to the spectroscopically characterized acceptors A0, A1, FX, FA and FB in turn. Oxidized P700 is reduced on the lumenal side of the thylakoid membrane by plastocyanin. In Torreya californica (California nutmeg), this protein is Photosystem I P700 chlorophyll a apoprotein A1.